A 283-amino-acid polypeptide reads, in one-letter code: Pantothenate synthetase (283 aa).

30–37 (MGNLHLGH) is an ATP binding site. The active-site Proton donor is H37. Residue Q61 participates in (R)-pantoate binding. Q61 contacts beta-alanine. 149–152 (GQKD) is a binding site for ATP. Q155 is a binding site for (R)-pantoate. Residues I178 and 186-189 (MSSR) contribute to the ATP site.

The protein belongs to the pantothenate synthetase family. Homodimer.

The protein localises to the cytoplasm. The catalysed reaction is (R)-pantoate + beta-alanine + ATP = (R)-pantothenate + AMP + diphosphate + H(+). It participates in cofactor biosynthesis; (R)-pantothenate biosynthesis; (R)-pantothenate from (R)-pantoate and beta-alanine: step 1/1. Catalyzes the condensation of pantoate with beta-alanine in an ATP-dependent reaction via a pantoyl-adenylate intermediate. This is Pantothenate synthetase from Shewanella pealeana (strain ATCC 700345 / ANG-SQ1).